Consider the following 257-residue polypeptide: 3-dehydroquinate dehydratase (257 aa).

Residues 50–52 (EWR) and Arg-86 contribute to the 3-dehydroquinate site. Residue His-147 is the Proton donor/acceptor of the active site. Lys-174 functions as the Schiff-base intermediate with substrate in the catalytic mechanism. 3-dehydroquinate contacts are provided by Arg-216, Ser-235, and Gln-239.

It belongs to the type-I 3-dehydroquinase family. Homodimer.

It carries out the reaction 3-dehydroquinate = 3-dehydroshikimate + H2O. It participates in metabolic intermediate biosynthesis; chorismate biosynthesis; chorismate from D-erythrose 4-phosphate and phosphoenolpyruvate: step 3/7. Its function is as follows. Involved in the third step of the chorismate pathway, which leads to the biosynthesis of aromatic amino acids. Catalyzes the cis-dehydration of 3-dehydroquinate (DHQ) and introduces the first double bond of the aromatic ring to yield 3-dehydroshikimate. In Geobacillus kaustophilus (strain HTA426), this protein is 3-dehydroquinate dehydratase.